A 501-amino-acid polypeptide reads, in one-letter code: Actin nucleation-promoting factor WASL (501 aa).

Ser-2 bears the N-acetylserine mark. A WH1 domain is found at 31-138; it reads LGKKCVTMSS…KAVTDLLGRR (108 aa). Residues 135–158 are disordered; sequence LGRRQRKSEKRRDAPNGPNLPMAT. In terms of domain architecture, CRIB spans 200–213; that stretch reads IGTPSNFQHIGHVG. Ser-239 is subject to Phosphoserine; by TNK2. Tyr-253 is subject to Phosphotyrosine; by FAK1 and TNK2. 2 disordered regions span residues 263–403 and 442–501; these read EAVK…GNKA and QLKS…EWED. The span at 273–387 shows a compositional bias: pro residues; that stretch reads APPPPPPSRG…PPGPPPPPGL (115 aa). At Arg-304 the chain carries Omega-N-methylarginine. WH2 domains follow at residues 401 to 418 and 429 to 446; these read NKAALLDQIREGAQLKKV and GRDALLDQIRQGIQLKSV. The segment covering 442-453 has biased composition (polar residues); that stretch reads QLKSVSDGQEST. A phosphoserine mark is found at Ser-480 and Ser-481. The span at 482-501 shows a compositional bias: acidic residues; it reads DEDEDDDDEEDFEDDDEWED.

Binds actin and the Arp2/3 complex. Interacts with CDC42. Interacts with FCHSD1. Interacts with FCHSD2. Binds to SH3 domains of GRB2. Interacts with the C-terminal SH3 domain of DNMBP. Interacts with SNX9. Interacts with the WW domains of PRPF40A/FBP11. Interacts with PTK2/FAK1. Interacts with PACSIN1, PACSIN2 and PACSIN3. Interacts with NOSTRIN. Binds to TNK2. Interacts with SNX33. Interacts with NONO (via second RRM domain); the interaction is direct. Component of a multiprotein complex with NONO and SFPQ; associates with the complex via direct interaction with NONO. Phosphorylation at Ser-239, Tyr-253, Ser-480 and Ser-481 enhances actin polymerization activity.

The protein resides in the cytoplasm. It is found in the cytoskeleton. The protein localises to the nucleus. Its function is as follows. Regulates actin polymerization by stimulating the actin-nucleating activity of the Arp2/3 complex. Involved in various processes, such as mitosis and cytokinesis, via its role in the regulation of actin polymerization. Together with CDC42, involved in the extension and maintenance of the formation of thin, actin-rich surface projections called filopodia. In addition to its role in the cytoplasm, also plays a role in the nucleus by regulating gene transcription, probably by promoting nuclear actin polymerization. Binds to HSF1/HSTF1 and forms a complex on heat shock promoter elements (HSE) that negatively regulates HSP90 expression. Plays a role in dendrite spine morphogenesis. This is Actin nucleation-promoting factor WASL (Wasl) from Mus musculus (Mouse).